A 127-amino-acid chain; its full sequence is Large ribosomal subunit protein bL17 (127 aa).

It belongs to the bacterial ribosomal protein bL17 family. In terms of assembly, part of the 50S ribosomal subunit. Contacts protein L32.

This is Large ribosomal subunit protein bL17 from Lactobacillus johnsonii (strain CNCM I-12250 / La1 / NCC 533).